The following is a 165-amino-acid chain: Phosphopantetheine adenylyltransferase (165 aa).

Substrate is bound at residue S10. Residues S10 to F11 and H18 contribute to the ATP site. The substrate site is built by K42, T79, and R93. ATP-binding positions include G94–R96, E104, and V129–T135.

The protein belongs to the bacterial CoaD family. In terms of assembly, homohexamer. Mg(2+) serves as cofactor.

The protein localises to the cytoplasm. It catalyses the reaction (R)-4'-phosphopantetheine + ATP + H(+) = 3'-dephospho-CoA + diphosphate. Its pathway is cofactor biosynthesis; coenzyme A biosynthesis; CoA from (R)-pantothenate: step 4/5. Functionally, reversibly transfers an adenylyl group from ATP to 4'-phosphopantetheine, yielding dephospho-CoA (dPCoA) and pyrophosphate. In Nitrobacter hamburgensis (strain DSM 10229 / NCIMB 13809 / X14), this protein is Phosphopantetheine adenylyltransferase.